The sequence spans 512 residues: GMP synthase [glutamine-hydrolyzing] (512 aa).

The Glutamine amidotransferase type-1 domain occupies 7–197; that stretch reads TIIVLDFGSQ…VFGVCGCSEG (191 aa). The Nucleophile role is filled by C84. Catalysis depends on residues H171 and E173. One can recognise a GMPS ATP-PPase domain in the interval 198–387; that stretch reads WNMENFIEVE…LGIPDEIVWR (190 aa). 225 to 231 is a binding site for ATP; that stretch reads SGGVDSS.

As to quaternary structure, homodimer.

It catalyses the reaction XMP + L-glutamine + ATP + H2O = GMP + L-glutamate + AMP + diphosphate + 2 H(+). Its pathway is purine metabolism; GMP biosynthesis; GMP from XMP (L-Gln route): step 1/1. Its function is as follows. Catalyzes the synthesis of GMP from XMP. This chain is GMP synthase [glutamine-hydrolyzing], found in Bacillus cereus (strain G9842).